The following is a 280-amino-acid chain: Succinate dehydrogenase [ubiquinone] iron-sulfur subunit, mitochondrial (280 aa).

Residues 1–28 (MAAVVALSLRRRLPATTLGGACLQASRG) constitute a mitochondrion transit peptide. One can recognise a 2Fe-2S ferredoxin-type domain in the interval 40–133 (KKFAIYRWDP…VSKIYPLPHM (94 aa)). Residues K51 and K55 each carry the N6-acetyllysine modification. Residues C93, C98, C101, and C113 each coordinate [2Fe-2S] cluster. The interval 146 to 218 (FYAQYKSIEP…PAVLMQAYRW (73 aa)) is interaction with SDHAF1. The 31-residue stretch at 176-206 (EREKLDGLYECILCACCSTSCPSYWWNGDKY) folds into the 4Fe-4S ferredoxin-type domain. 3 residues coordinate [4Fe-4S] cluster: C186, C189, and C192. Position 196 (C196) interacts with [3Fe-4S] cluster. W201 is an a ubiquinone binding site. [3Fe-4S] cluster-binding residues include C243 and C249. C253 contacts [4Fe-4S] cluster.

This sequence belongs to the succinate dehydrogenase/fumarate reductase iron-sulfur protein family. In terms of assembly, component of complex II composed of four subunits: the flavoprotein (FP) SDHA, iron-sulfur protein (IP) SDHB, and a cytochrome b560 composed of SDHC and SDHD. Interacts with SDHAF1; the interaction is required for iron-sulfur cluster incorporation into SDHB. (Microbial infection) Interacts with JC virus small t antigen. [2Fe-2S] cluster is required as a cofactor. It depends on [3Fe-4S] cluster as a cofactor. [4Fe-4S] cluster serves as cofactor.

The protein localises to the mitochondrion inner membrane. The enzyme catalyses a quinone + succinate = fumarate + a quinol. It catalyses the reaction (R)-malate + a quinone = enol-oxaloacetate + a quinol. It carries out the reaction (S)-malate + a quinone = enol-oxaloacetate + a quinol. It functions in the pathway carbohydrate metabolism; tricarboxylic acid cycle; fumarate from succinate (eukaryal route): step 1/1. Its activity is regulated as follows. Enol-oxaloacetate inhibits the succinate dehydrogenase activity. Its function is as follows. Iron-sulfur protein (IP) subunit of the succinate dehydrogenase complex (mitochondrial respiratory chain complex II), responsible for transferring electrons from succinate to ubiquinone (coenzyme Q). SDH also oxidizes malate to the non-canonical enol form of oxaloacetate, enol-oxaloacetate. Enol-oxaloacetate, which is a potent inhibitor of the succinate dehydrogenase activity, is further isomerized into keto-oxaloacetate. The protein is Succinate dehydrogenase [ubiquinone] iron-sulfur subunit, mitochondrial (SDHB) of Homo sapiens (Human).